Reading from the N-terminus, the 979-residue chain is Translation initiation factor IF-2 (979 aa).

Positions 68–392 (VKQKQGTPAS…SRAAQDAMEL (325 aa)) are disordered. Composition is skewed to basic and acidic residues over residues 102-179 (QDMR…KPEE), 217-229 (EMEKKEDTEEVFR), and 260-273 (TKEDRQREQNDADG). Positions 309–326 (PSGNKNNNRPAQQQSNAS) are enriched in polar residues. The span at 347 to 356 (DVQRQVKETL) shows a compositional bias: basic and acidic residues. A tr-type G domain is found at 478–646 (ARPPIVTVMG…KVLLEADILE (169 aa)). Positions 487 to 494 (GHVDHGKT) are G1. GTP is bound at residue 487–494 (GHVDHGKT). Residues 512–516 (GITQH) are G2. The G3 stretch occupies residues 534-537 (DTPG). GTP contacts are provided by residues 534–538 (DTPGH) and 588–591 (NKID). Positions 588-591 (NKID) are G4. Residues 624–626 (SAK) form a G5 region.

The protein belongs to the TRAFAC class translation factor GTPase superfamily. Classic translation factor GTPase family. IF-2 subfamily.

It localises to the cytoplasm. Its function is as follows. One of the essential components for the initiation of protein synthesis. Protects formylmethionyl-tRNA from spontaneous hydrolysis and promotes its binding to the 30S ribosomal subunits. Also involved in the hydrolysis of GTP during the formation of the 70S ribosomal complex. In Porphyromonas gingivalis (strain ATCC 33277 / DSM 20709 / CIP 103683 / JCM 12257 / NCTC 11834 / 2561), this protein is Translation initiation factor IF-2.